Here is a 124-residue protein sequence, read N- to C-terminus: Fluoride-specific ion channel FluC (124 aa).

3 helical membrane-spanning segments follow: residues 20 to 40 (LLSI…TLLV), 60 to 80 (ISPE…TTFS), and 102 to 122 (VLLN…LIFS). Na(+)-binding residues include Gly-74 and Thr-77.

Belongs to the fluoride channel Fluc/FEX (TC 1.A.43) family.

The protein resides in the cell inner membrane. It carries out the reaction fluoride(in) = fluoride(out). Its activity is regulated as follows. Na(+) is not transported, but it plays an essential structural role and its presence is essential for fluoride channel function. In terms of biological role, fluoride-specific ion channel. Important for reducing fluoride concentration in the cell, thus reducing its toxicity. This Shewanella frigidimarina (strain NCIMB 400) protein is Fluoride-specific ion channel FluC.